Consider the following 196-residue polypeptide: Cyclin-dependent kinase inhibitor 6 (196 aa).

2 disordered regions span residues 1–36 and 55–151; these read MSERKRELAEEASSTSFSPLKKTKLNDSSDSSPDSH and ASDE…RKTP. A compositionally biased stretch (low complexity) spans 124–139; the sequence is SEGLGETTTEMESSSA. Thr-152 bears the Phosphothreonine; by KIN10 mark.

The protein belongs to the CDI family. ICK/KRP subfamily. As to quaternary structure, specifically interacts with CDKA-1, but not with CDKB1-1. Interacts with CYCD1-1, CYCD4-1 and RHF1A. Binds to FBL17. Interacts with KIN10. Interacts with CYCD3-1. Ubiquitinated by RHF1A and SCF(FBL17). Ubiquitination leads to its subsequent degradation, thus controlling cell cycle progression. Post-translationally, the phosphorylation at Thr-152 by KIN10 represses its activity. In terms of tissue distribution, expressed in newly formed organs such as the shoot apex. Expressed in cotyledon, primary root and marginal region of the leaves as well as in developing pollen.

Its subcellular location is the nucleus. It localises to the nucleoplasm. Its activity is regulated as follows. Down-regulated by KIN10 under a phosphorylation-dependent manner. Functionally, binds and inhibits CYCD2-1/CDKA-1 complex kinase activity. Regulates cell division which is crucial for plant growth, development and morphogenesis. May inhibit CDK kinases specifically involved in the G1/S phase transition. The polypeptide is Cyclin-dependent kinase inhibitor 6 (KRP6) (Arabidopsis thaliana (Mouse-ear cress)).